Reading from the N-terminus, the 204-residue chain is MNNLLFVDASPHGSRSLGARIAREAIAQWQAAHPHARVVSRSLGQPGLPSISADYAHALVARQPDSDPALACSEQLIAEVEHSDGVLISTPMHNFTVPAALKLWIDFVLRIGRTFAATPEGKVGLLADRPVLVLVRSGGICRGAAARQPDFLTPYLKQVLAVIGFSTVDFIYLEGVAPDDAAIDAVRGQLAQSALLARRATETA.

S10 is a binding site for FMN.

Belongs to the azoreductase type 1 family. Homodimer. The cofactor is FMN.

It catalyses the reaction 2 a quinone + NADH + H(+) = 2 a 1,4-benzosemiquinone + NAD(+). It carries out the reaction N,N-dimethyl-1,4-phenylenediamine + anthranilate + 2 NAD(+) = 2-(4-dimethylaminophenyl)diazenylbenzoate + 2 NADH + 2 H(+). Quinone reductase that provides resistance to thiol-specific stress caused by electrophilic quinones. Its function is as follows. Also exhibits azoreductase activity. Catalyzes the reductive cleavage of the azo bond in aromatic azo compounds to the corresponding amines. This is FMN-dependent NADH:quinone oxidoreductase 5 from Burkholderia lata (strain ATCC 17760 / DSM 23089 / LMG 22485 / NCIMB 9086 / R18194 / 383).